The chain runs to 502 residues: Probable cytosol aminopeptidase (502 aa).

Mn(2+) is bound by residues K270 and D275. The active site involves K282. Positions 293, 352, and 354 each coordinate Mn(2+). Residue R356 is part of the active site.

The protein belongs to the peptidase M17 family. Mn(2+) is required as a cofactor.

It localises to the cytoplasm. It carries out the reaction Release of an N-terminal amino acid, Xaa-|-Yaa-, in which Xaa is preferably Leu, but may be other amino acids including Pro although not Arg or Lys, and Yaa may be Pro. Amino acid amides and methyl esters are also readily hydrolyzed, but rates on arylamides are exceedingly low.. The catalysed reaction is Release of an N-terminal amino acid, preferentially leucine, but not glutamic or aspartic acids.. Presumably involved in the processing and regular turnover of intracellular proteins. Catalyzes the removal of unsubstituted N-terminal amino acids from various peptides. This is Probable cytosol aminopeptidase from Desulfotalea psychrophila (strain LSv54 / DSM 12343).